Reading from the N-terminus, the 376-residue chain is Galactoside alpha-(1,2)-fucosyltransferase 1 (376 aa).

Over 1–12 the chain is Cytoplasmic; that stretch reads MWTPSRKQLCLA. Residues 13–29 traverse the membrane as a helical; Signal-anchor for type II membrane protein segment; the sequence is FLSVCVLSAGSFFFHLN. The Lumenal segment spans residues 30 to 376; that stretch reads GGNFFQNALT…WETDSLFRLA (347 aa). N-linked (GlcNAc...) asparagine glycosylation is found at Asn64, Asn302, and Asn328.

It belongs to the glycosyltransferase 11 family.

It localises to the golgi apparatus. The protein resides in the golgi stack membrane. It catalyses the reaction a beta-D-galactosyl-(1-&gt;4)-N-acetyl-beta-D-glucosaminyl derivative + GDP-beta-L-fucose = an alpha-L-Fuc-(1-&gt;2)-beta-D-Gal-(1-&gt;4)-beta-D-GlcNAc derivative + GDP + H(+). The enzyme catalyses a ganglioside GA1 + GDP-beta-L-fucose = a ganglioside Fuc-GA1 + GDP + H(+). The catalysed reaction is a beta-D-Gal-(1-&gt;3)-beta-D-GlcNAc-(1-&gt;3)-beta-D-Gal-(1-&gt;4)-beta-D-Glc-(1&lt;-&gt;1')-Cer(d18:1(4E)) + GDP-beta-L-fucose = alpha-L-fucosyl-(1-&gt;2)- beta-D-galactosyl-(1-&gt;3)-N-acetyl-beta-D-glucosaminyl-(1-&gt;3)-beta-D-galactosyl-(1-&gt;4)-beta-D-glucosyl-(1&lt;-&gt;1')-N-acylsphing-4-enine + GDP + H(+). It carries out the reaction a neolactoside nLc4Cer(d18:1(4E)) + GDP-beta-L-fucose = a neolactoside IV(2)-alpha-Fuc-nLc4Cer(d18:1(4E)) + GDP + H(+). It catalyses the reaction a ganglioside GM1 + GDP-beta-L-fucose = a ganglioside Fuc-GM1 + GDP + H(+). The enzyme catalyses beta-D-galactosyl-(1-&gt;3)-N-acetyl-D-galactosamine + GDP-beta-L-fucose = alpha-L-fucosyl-(1-&gt;2)-beta-D-galactosyl-(1-&gt;3)-N-acetyl-D-galactosamine + GDP + H(+). The protein operates within protein modification; protein glycosylation. Catalyzes the transfer of L-fucose, from a guanosine diphosphate-beta-L-fucose, to the terminal galactose residue of glycoconjugates through an alpha(1,2) linkage leading to H antigen synthesis that is an intermediate substrate in the synthesis of ABO blood group antigens. H antigen is essential for maturation of the glomerular layer of the main olfactory bulb, in cell migration and early cell-cell contacts during tumor associated angiogenesis. Preferentially fucosylates soluble lactose and to a lesser extent fucosylates glycolipids gangliosides GA1 and GM1a. The sequence is that of Galactoside alpha-(1,2)-fucosyltransferase 1 from Rattus norvegicus (Rat).